The sequence spans 871 residues: MSVDESNSDSEIDSISSSDEDEEPKLIYERITEKFQGCFMNDTISACAISKEHFFFGSHNGAIYIYQKNGILLRKMILHSASVVDLSVDLESENLASCSMDGKMIISNITTRETTVHDFKRPLLSVAIDPYYSTRSSRQVLSGGRAGKVVLSEKGWLGNKDTVLQADCGAVYKISWYTTYIAWASDLGITVYSTEFGKVLGRLEPPKRLPNDEIFPYQLFWQSESRLVIGWSDQIMIVSIQRSNVANELPKISLQALLEIDSIVSGVLMLGFNILTLAYIANVEDFTSAIPSQRIEGCRPELRLIDSSFKELCGDAIGLANYSRLQPSDYHLLPDPSSNSHSFVISPNDIVYVRERNQIDHVKYLVSKEMYAEAIDAVKKLPEIPPSLQISELAKKYIFHLLGKGQYKEAGMVIPSLYNDNLAEWEQWVFVFAENDHLEDIADFLPTGENHLSPLVYEMILAQYLATDERTFNKKLHEWPTMLYSVSTIRNATLKKFKENQKSSTLTESLAFLYLEDNMPIDAFHLYLKLHSELCIDLILQHNLYDEARASVLLLMLISSKGKSSDTKSAMSSMLVQHVHSFPPQEVIMQIHSVPQFLYEYFCEFELMYPNSLMEYGDLKLDVFAEFDRKRFFDFLVNTQCYSLDHAAQICKQYNYLDELVYILGRMGNNKEALMLIINELLDIGRAIRYVKEQADRELWDDLISYSLDKPEFICTLLENIGTDENARNLLSKIPPGTKLPHMKKSISKLLADHQSQVQLYQSCYKLFKNESISMAIKYREQEQSGLEFLVKDNPFNSFGDEQLDYNYRKRIPMIYDLRTKKYIRPEDVRIDTDDVFKDDKIAYFKTRMHLKPEVQMRNKLDLLMMLYKQT.

Residues 1 to 23 (MSVDESNSDSEIDSISSSDEDEE) form a disordered region. WD repeat units follow at residues 39–76 (FMNDTISACAISKEHFFFGSHNGAIYIYQKNGILLRKM), 78–117 (LHSASVVDLSVDLESENLASCSMDGKMIISNITTRETTVH), 119–162 (FKRP…NKDT), and 166–204 (ADCGAVYKISWYTTYIAWASDLGITVYSTEFGKVLGRLE). The stretch at 575-716 (LVQHVHSFPP…SLDKPEFICT (142 aa)) is one CHCR repeat.

The protein belongs to the VPS41 family.

Functionally, required for vacuolar assembly and vacuolar traffic. The chain is Vacuolar protein sorting-associated protein 41 (vps41) from Schizosaccharomyces pombe (strain 972 / ATCC 24843) (Fission yeast).